Consider the following 364-residue polypeptide: Uroporphyrinogen decarboxylase (364 aa).

Substrate is bound by residues 28–32 (RQAGR), Asp78, Tyr160, Thr215, and His333.

The protein belongs to the uroporphyrinogen decarboxylase family. In terms of assembly, homodimer.

It is found in the cytoplasm. It catalyses the reaction uroporphyrinogen III + 4 H(+) = coproporphyrinogen III + 4 CO2. It functions in the pathway porphyrin-containing compound metabolism; protoporphyrin-IX biosynthesis; coproporphyrinogen-III from 5-aminolevulinate: step 4/4. Its function is as follows. Catalyzes the decarboxylation of four acetate groups of uroporphyrinogen-III to yield coproporphyrinogen-III. The protein is Uroporphyrinogen decarboxylase of Burkholderia thailandensis (strain ATCC 700388 / DSM 13276 / CCUG 48851 / CIP 106301 / E264).